The chain runs to 558 residues: S-layer protein (558 aa).

An N-terminal signal peptide occupies residues 1–28; sequence MAMSLKKIGAIAVGGAMVATALASGVAA. N-linked (GlcNAc...) asparagine glycans are attached at residues Asn-112, Asn-138, Asn-158, Asn-197, Asn-226, Asn-291, and Asn-374.

The protein belongs to the Mj S-layer protein family.

The protein localises to the secreted. Its subcellular location is the cell wall. It is found in the S-layer. Functionally, S-layer protein. The S-layer is a paracrystalline mono-layered assembly of proteins which coat the surface of the cell. The protein is S-layer protein (sla) of Methanocaldococcus jannaschii (strain ATCC 43067 / DSM 2661 / JAL-1 / JCM 10045 / NBRC 100440) (Methanococcus jannaschii).